Consider the following 218-residue polypeptide: Thyroid hormone receptor alpha (218 aa).

In terms of domain architecture, NR LBD spans 1 to 215 (PEDIGQSPGV…PPLFLEVFED (215 aa)). Arginine 36 and serine 85 together coordinate 3,3',5-triiodo-L-thyronine.

The protein belongs to the nuclear hormone receptor family. NR1 subfamily.

The protein resides in the nucleus. Its function is as follows. Nuclear hormone receptor that can act as a repressor or activator of transcription. High affinity receptor for thyroid hormones, including triiodothyronine and thyroxine. This Oncorhynchus mykiss (Rainbow trout) protein is Thyroid hormone receptor alpha (thra).